The primary structure comprises 174 residues: UPF0398 protein YfdB (174 aa).

It belongs to the UPF0398 family.

The sequence is that of UPF0398 protein YfdB (yfdB) from Lactococcus lactis subsp. lactis (strain IL1403) (Streptococcus lactis).